The primary structure comprises 479 residues: Odorant receptor coreceptor (479 aa).

Topologically, residues 1–43 (MHVQPTKYHGLVLDLMPNIRLMQGFGHFLFRYVSGPVLIRKLY) are cytoplasmic. The chain crosses the membrane as a helical span at residues 44-64 (SWWNLIMILLQYFAIMGNLVM). Over 65–73 (NTGDVNELT) the chain is Extracellular. A helical transmembrane segment spans residues 74–94 (ANTITTLFFTHSVTKFIYVAV). Residues 95–133 (NSEHFYRTLGIWNQPNSHSLFAESDARYHSIALAKMRKL) lie on the Cytoplasmic side of the membrane. Residues 134 to 154 (LVMVMVTTVLSVVAWITITFF) traverse the membrane as a helical segment. The Extracellular portion of the chain corresponds to 155-187 (GDSVKNVFDKETNETYTVEIPRLPIKALYPWDA). N-linked (GlcNAc...) asparagine glycosylation occurs at N167. A helical membrane pass occupies residues 188 to 208 (MSGVPYFFSFVYQAYFLLFSM). Over 209-344 (CQANLADVMF…VERHKHVVRL (136 aa)) the chain is Cytoplasmic. A helical transmembrane segment spans residues 345-365 (VSAIGETYGAALLLHMLTSTI). Topologically, residues 366-383 (KLTLLAYQATKIDALNVY) are extracellular. The helical transmembrane segment at 384–404 (GLTVIGYLVYALAQVFLFCIF) threads the bilayer. The Cytoplasmic segment spans residues 405–455 (GNRLIEESSSVMEAAYSCHWYDGSEEAKTFVQIVCQQCQKAMTISGAKFFT). The chain crosses the membrane as a helical span at residues 456–476 (VSLDLFASVLGAVVTYFMVLV). The Extracellular portion of the chain corresponds to 477–479 (QLK).

Belongs to the insect chemoreceptor superfamily. Heteromeric odorant receptor channel (TC 1.A.69) family. Orco subfamily. In terms of assembly, heterodimer with conventional odorant receptors (ORs). As to expression, expressed in female antenna, maxillary palp and proboscis. Not detected in male tissues.

It is found in the cell membrane. Odorant coreceptor which complexes with conventional odorant receptors (ORs) to form odorant-sensing units, providing sensitive and prolonged odorant signaling and calcium permeability. Orco is a universal and integral part of the functional odorant receptor, involved in the dendritic localization of other olfactory receptors. Required for detecting a host for blood feeding. Plays a key role in preferred attraction of females for humans over non-human hosts for blood feeding. In Aedes albopictus (Asian tiger mosquito), this protein is Odorant receptor coreceptor.